The following is a 51-amino-acid chain: Lantibiotic flavucin (51 aa).

Positions 1–20 (MSDFTLDFAEGDAADTVSPQ) are excised as a propeptide. Positions 23–27 (SKSLC) form a cross-link, lanthionine (Ser-Cys). 3 consecutive cross-links (beta-methyllanthionine (Thr-Cys)) follow at residues 28–31 (TPGC), 33–38 (TGWMMC), and 42–45 (TKGC).

It belongs to the type A lantibiotic family. In terms of processing, maturation of lantibiotics involves the enzymatic conversion of Thr, and Ser into dehydrated AA and the formation of thioether bonds with cysteine. This is followed by membrane translocation and cleavage of the modified precursor.

Its activity is regulated as follows. Antimicrobial activity depends on the dehydration degree and integrity of flavucin. Functionally, lanthionine-containing peptide antibiotic (lantibiotic) active on certain Gram-positive bacteria. The bactericidal activity of lantibiotics is based on depolarization of energized bacterial cytoplasmic membranes, initiated by the formation of aqueous transmembrane pores. Flavucin has high antimicrobial activity against several pathogenic bacteria such as S.aureus, E.faecalis, E.faecium and L.monocytogenes. Is also active against the Gram-negative P.aeruginosa. The protein is Lantibiotic flavucin of Corynebacterium lipophiloflavum (strain ATCC 700352 / DSM 44291 / CCUG 37336 / JCM 10383 / DMMZ 1944).